Consider the following 184-residue polypeptide: Cobalamin adenosyltransferase (184 aa).

The interval 1-21 is disordered; sequence MGNRLSKIATRTGDAGTTGLG. ATP contacts are provided by residues 10-13, 18-19, Lys28, 130-134, and Asn154; these read TRTG, TG, and RRAER.

Belongs to the Cob(I)alamin adenosyltransferase family. As to quaternary structure, homotrimer.

It carries out the reaction 2 cob(II)alamin + AH2 + 2 ATP = 2 adenosylcob(III)alamin + 2 triphosphate + A + 2 H(+). Its activity is regulated as follows. Is potentially allosterically regulated by GTP/GDP, which enhances its affinity for AdoCbl by 5-fold. Binds cob(II)alamin weakly in the absence of ATP. The presence of ATP (but not GTP or GDP) increases the affinity of cob(II)alamin for the enzyme, and stoichiometric binding is observed. GTP blocks the transfer of cob(II)alamin to IcmF from ATR, thus averting its reconstitution with inactive cofactor. Its function is as follows. Adenosyltransferase that catalyzes the conversion of cob(II)alamin to adenosylcob(III)alamin (AdoCbl) in the presence of ATP and an electron donor. Acts as an accessory protein of IcmF that functions in cofactor repair, since IcmF is prone to inactivation during catalytic turnover due to the occasional loss of the 5'-deoxyadenosine moiety and formation of the inactive cob(II)alamin cofactor in its active site. Thus, receives and repairs the inactive cofactor, which is then reloaded onto IcmF in a GTPase-gated step. The sequence is that of Cobalamin adenosyltransferase from Cupriavidus metallidurans (strain ATCC 43123 / DSM 2839 / NBRC 102507 / CH34) (Ralstonia metallidurans).